Reading from the N-terminus, the 593-residue chain is Polyphenol oxidase, chloroplastic (593 aa).

Residues Met-1–Thr-13 are compositionally biased toward low complexity. The disordered stretch occupies residues Met-1–Leu-34. The transit peptide at Met-1–Ala-89 directs the protein to the chloroplast. Over residues Pro-24–Leu-34 the composition is skewed to polar residues. 2 cysteine pairs are disulfide-bonded: Cys-100–Cys-115 and Cys-114–Cys-176. Positions 175, 196, 205, 327, 331, and 361 each coordinate Cu cation. Residues Cys-179–His-196 constitute a cross-link (2'-(S-cysteinyl)-histidine (Cys-His)).

This sequence belongs to the tyrosinase family. Cu(2+) serves as cofactor.

The protein resides in the plastid. The protein localises to the chloroplast thylakoid lumen. It catalyses the reaction 2 catechol + O2 = 2 1,2-benzoquinone + 2 H2O. In terms of biological role, catalyzes the oxidation of mono- and o-diphenols to o-diquinones. The chain is Polyphenol oxidase, chloroplastic from Malus domestica (Apple).